Consider the following 291-residue polypeptide: MQELRFVLIIVGALAIAALLFHGLWTSKKEGKSKFGDKPLRKMKVESDDPPSRAFAAEDDFEIIRKERKEPDFGIPNQQHDPLISDFAAHDELDEEEDEEARIPVQPQSQPQPRKVQPQVEMPRVAPNVPMAKVQPEVVTEIEVQEPQEEKLDVIVLNVHCAGNQPFIGTKLFDSMQQNGLLFGEMDIFHRHADLSGTGKVLFSVANMMQPGTLMHDDPADFSTKGISFFMTLPCFGDPEQNFKLMLKTAQQIADDLGGHVLDDARNLMTPNRLDAYRKQIQEFKVRAAQA.

Over 1–5 (MQELR) the chain is Periplasmic. Residues 6–26 (FVLIIVGALAIAALLFHGLWT) form a helical membrane-spanning segment. Residues 27–291 (SKKEGKSKFG…QEFKVRAAQA (265 aa)) lie on the Cytoplasmic side of the membrane. Residues 29-51 (KEGKSKFGDKPLRKMKVESDDPP) show a composition bias toward basic and acidic residues. 2 disordered regions span residues 29 to 61 (KEGKSKFGDKPLRKMKVESDDPPSRAFAAEDDF) and 92 to 119 (ELDEEEDEEARIPVQPQSQPQPRKVQPQ).

Belongs to the ZipA family. As to quaternary structure, interacts with FtsZ via their C-terminal domains.

Its subcellular location is the cell inner membrane. In terms of biological role, essential cell division protein that stabilizes the FtsZ protofilaments by cross-linking them and that serves as a cytoplasmic membrane anchor for the Z ring. Also required for the recruitment to the septal ring of downstream cell division proteins. The protein is Cell division protein ZipA of Vibrio cholerae serotype O1 (strain ATCC 39541 / Classical Ogawa 395 / O395).